A 681-amino-acid chain; its full sequence is UvrABC system protein B (681 aa).

The Helicase ATP-binding domain occupies alanine 32–arginine 419. ATP is bound at residue glycine 45–serine 52. The Beta-hairpin motif lies at tyrosine 98–isoleucine 121. The Helicase C-terminal domain occupies glutamine 436 to leucine 602. Residues glutamate 607–serine 616 show a composition bias toward polar residues. A disordered region spans residues glutamate 607–asparagine 626. Residues arginine 636–glutamate 671 enclose the UVR domain.

It belongs to the UvrB family. Forms a heterotetramer with UvrA during the search for lesions. Interacts with UvrC in an incision complex.

It localises to the cytoplasm. In terms of biological role, the UvrABC repair system catalyzes the recognition and processing of DNA lesions. A damage recognition complex composed of 2 UvrA and 2 UvrB subunits scans DNA for abnormalities. Upon binding of the UvrA(2)B(2) complex to a putative damaged site, the DNA wraps around one UvrB monomer. DNA wrap is dependent on ATP binding by UvrB and probably causes local melting of the DNA helix, facilitating insertion of UvrB beta-hairpin between the DNA strands. Then UvrB probes one DNA strand for the presence of a lesion. If a lesion is found the UvrA subunits dissociate and the UvrB-DNA preincision complex is formed. This complex is subsequently bound by UvrC and the second UvrB is released. If no lesion is found, the DNA wraps around the other UvrB subunit that will check the other stand for damage. This is UvrABC system protein B from Corynebacterium diphtheriae (strain ATCC 700971 / NCTC 13129 / Biotype gravis).